We begin with the raw amino-acid sequence, 886 residues long: Leucine-rich repeat-containing protein sog2 (886 aa).

6 LRR repeats span residues 28–49 (NALT…QLER), 53–74 (RIAR…ILKF), 76–97 (RLRY…LCRL), 99–120 (SLEI…FGAL), 122–143 (NLKV…IAHM), and 145–166 (NLEI…IANN). Disordered stretches follow at residues 236–288 (SPGM…THPP), 301–364 (SPRQ…ASPI), 394–431 (PTQL…STRL), and 455–483 (RIFA…TNDS). The segment covering 243–277 (VTPSPHSHSPAGHQQSTPKSTLSKTNENSEGTLYD) has biased composition (polar residues). The residue at position 301 (Ser301) is a Phosphoserine. Composition is skewed to polar residues over residues 312–347 (SLAT…SSVA), 394–406 (PTQL…TSAI), and 419–431 (SNST…STRL). Ser464 bears the Phosphoserine mark.

The protein resides in the cytoplasm. Its subcellular location is the nucleus. The sequence is that of Leucine-rich repeat-containing protein sog2 from Schizosaccharomyces pombe (strain 972 / ATCC 24843) (Fission yeast).